Here is a 451-residue protein sequence, read N- to C-terminus: MEGKVIGIHGPVLDLQFTDYTPFERELIKVRDILVECRALLGEGKVRTVALGPTEGIRRGDKATALGKPMTIKVGEQLIGRVLSGIGAPLDQKEEPEGEERSVFNVPPQVTAVLPVSTVLETGIKALDLLAPFPRGGKIGLFGGAGVGKTVLVMELIHNVAIKHRGYSVFAGVGERTREGQELWEEMRESGVMDHLVMIFGQMNEPPGVRAITPYAAATVAEYLRSQYGGEILLFMDNIFRYAQAGMEVSTLLGRMPSAMGYQPTLFSEVAQIEERINSLAEGAITSVQAVYVPADDITDPAPATIFGHLDSSVVLSRALTEVGIYPAVDPLQSSSKMLDPEVVGYNHVQVAGRVKEFLQRYEELKDIIALLGMEELSPEDREVVLRARKIQMFLSQPFFVAEAFSGAPGKYVPLERTVEGFKAIIDGKLDHVPESALYMIGDISEAGVDV.

143–150 (GGAGVGKT) is an ATP binding site.

It belongs to the ATPase alpha/beta chains family. As to quaternary structure, F-type ATPases have 2 components, CF(1) - the catalytic core - and CF(0) - the membrane proton channel. CF(1) has five subunits: alpha(3), beta(3), gamma(1), delta(1), epsilon(1). CF(0) has three main subunits: a(1), b(2) and c(9-12). The alpha and beta chains form an alternating ring which encloses part of the gamma chain. CF(1) is attached to CF(0) by a central stalk formed by the gamma and epsilon chains, while a peripheral stalk is formed by the delta and b chains.

Its subcellular location is the cell membrane. The catalysed reaction is ATP + H2O + 4 H(+)(in) = ADP + phosphate + 5 H(+)(out). Its function is as follows. Produces ATP from ADP in the presence of a proton gradient across the membrane. The catalytic sites are hosted primarily by the beta subunits. The protein is ATP synthase subunit beta of Coprothermobacter proteolyticus (strain ATCC 35245 / DSM 5265 / OCM 4 / BT).